Reading from the N-terminus, the 566-residue chain is uncharacterized protein (566 aa).

This sequence belongs to the protein kinase superfamily. ADCK protein kinase family.

This is an uncharacterized protein from Synechocystis sp. (strain ATCC 27184 / PCC 6803 / Kazusa).